A 1135-amino-acid chain; its full sequence is MSLQMPIPRKKALTVSHFSITLSLFLAFFISSTSASTNEVSALISWLHSSNSPPPSVFSGWNPSDSDPCQWPYITCSSSDNKLVTEINVVSVQLALPFPPNISSFTSLQKLVISNTNLTGAISSEIGDCSELIVIDLSSNSLVGEIPSSLGKLKNLQELCLNSNGLTGKIPPELGDCVSLKNLEIFDNYLSENLPLELGKISTLESIRAGGNSELSGKIPEEIGNCRNLKVLGLAATKISGSLPVSLGQLSKLQSLSVYSTMLSGEIPKELGNCSELINLFLYDNDLSGTLPKELGKLQNLEKMLLWQNNLHGPIPEEIGFMKSLNAIDLSMNYFSGTIPKSFGNLSNLQELMLSSNNITGSIPSILSNCTKLVQFQIDANQISGLIPPEIGLLKELNIFLGWQNKLEGNIPDELAGCQNLQALDLSQNYLTGSLPAGLFQLRNLTKLLLISNAISGVIPLEIGNCTSLVRLRLVNNRITGEIPKGIGFLQNLSFLDLSENNLSGPVPLEISNCRQLQMLNLSNNTLQGYLPLSLSSLTKLQVLDVSSNDLTGKIPDSLGHLISLNRLILSKNSFNGEIPSSLGHCTNLQLLDLSSNNISGTIPEELFDIQDLDIALNLSWNSLDGFIPERISALNRLSVLDISHNMLSGDLSALSGLENLVSLNISHNRFSGYLPDSKVFRQLIGAEMEGNNGLCSKGFRSCFVSNSSQLTTQRGVHSHRLRIAIGLLISVTAVLAVLGVLAVIRAKQMIRDDNDSETGENLWTWQFTPFQKLNFTVEHVLKCLVEGNVIGKGCSGIVYKAEMPNREVIAVKKLWPVTVPNLNEKTKSSGVRDSFSAEVKTLGSIRHKNIVRFLGCCWNKNTRLLMYDYMSNGSLGSLLHERSGVCSLGWEVRYKIILGAAQGLAYLHHDCVPPIVHRDIKANNILIGPDFEPYIGDFGLAKLVDDGDFARSSNTIAGSYGYIAPEYGYSMKITEKSDVYSYGVVVLEVLTGKQPIDPTIPDGLHIVDWVKKIRDIQVIDQGLQARPESEVEEMMQTLGVALLCINPIPEDRPTMKDVAAMLSEICQEREESMKVDGCSGSCNNGRERGKDDSTSSVMQQTAKYLRSSSTSFSASSLLYSSSSSATSNVRPNLK.

Residues 1 to 35 (MSLQMPIPRKKALTVSHFSITLSLFLAFFISSTSA) form the signal peptide. At 36–723 (STNEVSALIS…QRGVHSHRLR (688 aa)) the chain is on the extracellular side. A disulfide bond links Cys-69 and Cys-76. N-linked (GlcNAc...) asparagine glycosylation is found at Asn-101 and Asn-117. 4 LRR repeats span residues 105–129 (FTSL…IGDC), 130–153 (SELI…LGKL), 154–177 (KNLQ…LGDC), and 179–203 (SLKN…KIST). 4 consecutive short sequence motifs (small peptide recognition) follow at residues 186–187 (FD), 208–211 (RAGG), 231–236 (VLGLAA), and Tyr-259. LRR repeat units lie at residues 226 to 250 (CRNL…LGQL), 251 to 274 (SKLQ…LGNC), 276 to 298 (ELIN…LGKL), 299 to 323 (QNLE…GFMK), 325 to 345 (LNAI…SFGN), 346 to 370 (LSNL…LSNC), 372 to 395 (KLVQ…GLLK), 397 to 418 (LNIF…LAGC), 419 to 442 (QNLQ…LFQL), 444 to 466 (NLTK…IGNC), 467 to 490 (TSLV…IGFL), 491 to 514 (QNLS…ISNC), 516 to 538 (QLQM…LSSL), 539 to 562 (TKLQ…LGHL), 564 to 586 (SLNR…LGHC), 587 to 610 (TNLQ…LFDI), 612 to 634 (DLDI…RISA), 635 to 658 (LNRL…LSGL), and 659 to 683 (ENLV…VFRQ). An N-linked (GlcNAc...) asparagine glycan is attached at Asn-273. Positions 281–283 (FLY) match the Small peptide recognition motif. The short motif at 329–332 (DLSM) is the Small peptide recognition element. N-linked (GlcNAc...) asparagine glycosylation is present at Asn-345. The short motif at 351 to 353 (ELM) is the Small peptide recognition element. 2 N-linked (GlcNAc...) asparagine glycosylation sites follow: Asn-358 and Asn-369. 2 short sequence motifs (small peptide recognition) span residues 399 to 403 (IFLGW) and 425 to 428 (DLSQ). N-linked (GlcNAc...) asparagine glycosylation is present at Asn-444. Positions 447 to 451 (KLLLI) match the Small peptide recognition motif. Residue Asn-465 is glycosylated (N-linked (GlcNAc...) asparagine). Residues 471–473 (RLR) carry the Small peptide recognition motif. N-linked (GlcNAc...) asparagine glycans are attached at residues Asn-492, Asn-502, Asn-521, and Asn-524. Asn-598 and Asn-618 each carry an N-linked (GlcNAc...) asparagine glycan. 2 N-linked (GlcNAc...) asparagine glycosylation sites follow: Asn-665 and Asn-707. Residues 724-744 (IAIGLLISVTAVLAVLGVLAV) form a helical membrane-spanning segment. Residues 745 to 1135 (IRAKQMIRDD…ATSNVRPNLK (391 aa)) are Cytoplasmic-facing. Position 777 is a phosphothreonine (Thr-777). The Protein kinase domain occupies 785 to 1066 (LVEGNVIGKG…KDVAAMLSEI (282 aa)). Residues 791–799 (IGKGCSGIV) and Lys-813 each bind ATP. Phosphotyrosine is present on residues Tyr-868 and Tyr-907. Asp-920 acts as the Proton acceptor in catalysis. Tyr-963 and Tyr-970 each carry phosphotyrosine. The segment at 1077-1135 (DGCSGSCNNGRERGKDDSTSSVMQQTAKYLRSSSTSFSASSLLYSSSSSATSNVRPNLK) is disordered. Residues 1108–1128 (SSSTSFSASSLLYSSSSSATS) show a composition bias toward low complexity.

It belongs to the protein kinase superfamily. Ser/Thr protein kinase family. As to quaternary structure, binds to RGF peptides such as RGF1, GLV5/CLEL1/RGF2, GLV7/CLEL3/RGF3, GLV3/RGF4, GLV10/CLEL7/RGF5 and RGF10/CLELN; these interactions trigger the formation of heterodimers with SERK1. Interacts with UBP13. In terms of processing, phosphorylated and ubiquitinated upon interaction with RGF1, thus leading to activation a subsequent degradation. Stabilized by UBP12 and UBP13-mediated deubiquitination. Post-translationally, autophosphorylated. As to expression, specific to root meristems, especially in lateral root meristems (LRM).

The protein resides in the membrane. It carries out the reaction L-seryl-[protein] + ATP = O-phospho-L-seryl-[protein] + ADP + H(+). It catalyses the reaction L-threonyl-[protein] + ATP = O-phospho-L-threonyl-[protein] + ADP + H(+). Functionally, together with RGI1, RGI3, RGI4 and RGI5, acts as a receptor of RGF peptides (e.g. RGF1, GLV5/CLEL1/RGF2, GLV7/CLEL3/RGF3, GLV3/RGF4, GLV10/CLEL7/RGF5 and RGF10/CLELN), peptide hormones which maintain the postembryonic root stem cell niche by regulating the expression levels and patterns of the transcription factor PLETHORA (PLT, e.g. PLT1 and PLT2). Links RGF peptides signal with their downstream components. The protein is LRR receptor-like serine/threonine-protein kinase RGI2 of Arabidopsis thaliana (Mouse-ear cress).